We begin with the raw amino-acid sequence, 108 residues long: V-type proton ATPase subunit G (108 aa).

A compositionally biased stretch (basic and acidic residues) spans 48-60; the sequence is YASKKEEEFKKSE. Positions 48-89 are disordered; it reads YASKKEEEFKKSESQASGIYSQAEAESKKQVQDTFASIETSS. The segment covering 79-89 has biased composition (polar residues); it reads QDTFASIETSS.

Belongs to the V-ATPase G subunit family. In terms of assembly, V-ATPase is a heteromultimeric enzyme composed of a peripheral catalytic V1 complex (components A to H) attached to an integral membrane V0 proton pore complex (components: a, c, c', c'', d, e, f and VOA1).

Its subcellular location is the vacuole membrane. Functionally, subunit of the V1 complex of vacuolar(H+)-ATPase (V-ATPase), a multisubunit enzyme composed of a peripheral complex (V1) that hydrolyzes ATP and a membrane integral complex (V0) that translocates protons. V-ATPase is responsible for acidifying and maintaining the pH of intracellular compartments. The sequence is that of V-type proton ATPase subunit G (vma10) from Schizosaccharomyces pombe (strain 972 / ATCC 24843) (Fission yeast).